A 152-amino-acid chain; its full sequence is Protein-export protein SecB (152 aa).

It belongs to the SecB family. Homotetramer, a dimer of dimers. One homotetramer interacts with 1 SecA dimer.

It localises to the cytoplasm. One of the proteins required for the normal export of preproteins out of the cell cytoplasm. It is a molecular chaperone that binds to a subset of precursor proteins, maintaining them in a translocation-competent state. It also specifically binds to its receptor SecA. This is Protein-export protein SecB from Rickettsia conorii (strain ATCC VR-613 / Malish 7).